The following is a 231-amino-acid chain: Adenosylcobinamide-GDP ribazoletransferase (231 aa).

6 consecutive transmembrane segments (helical) span residues 24–44 (LWAF…ILYL), 46–66 (LPLS…LLHL), 96–116 (IAGL…LQLL), 159–176 (LALG…VVLF), 181–198 (LAGI…RISL), and 209–229 (LGAT…LVWW).

Belongs to the CobS family. Mg(2+) serves as cofactor.

Its subcellular location is the cell membrane. It carries out the reaction alpha-ribazole + adenosylcob(III)inamide-GDP = adenosylcob(III)alamin + GMP + H(+). It catalyses the reaction alpha-ribazole 5'-phosphate + adenosylcob(III)inamide-GDP = adenosylcob(III)alamin 5'-phosphate + GMP + H(+). It participates in cofactor biosynthesis; adenosylcobalamin biosynthesis; adenosylcobalamin from cob(II)yrinate a,c-diamide: step 7/7. Its function is as follows. Joins adenosylcobinamide-GDP and alpha-ribazole to generate adenosylcobalamin (Ado-cobalamin). Also synthesizes adenosylcobalamin 5'-phosphate from adenosylcobinamide-GDP and alpha-ribazole 5'-phosphate. The polypeptide is Adenosylcobinamide-GDP ribazoletransferase (Thermococcus kodakarensis (strain ATCC BAA-918 / JCM 12380 / KOD1) (Pyrococcus kodakaraensis (strain KOD1))).